The chain runs to 102 residues: Large ribosomal subunit protein bL21 (102 aa).

Belongs to the bacterial ribosomal protein bL21 family. As to quaternary structure, part of the 50S ribosomal subunit. Contacts protein L20.

Its function is as follows. This protein binds to 23S rRNA in the presence of protein L20. The chain is Large ribosomal subunit protein bL21 from Oleidesulfovibrio alaskensis (strain ATCC BAA-1058 / DSM 17464 / G20) (Desulfovibrio alaskensis).